A 553-amino-acid polypeptide reads, in one-letter code: Protein PALS2 (553 aa).

L27 domains follow at residues 1-48 (MQQV…EDSK) and 49-107 (LEAV…YDSP). The region spanning 129–208 (ILGIHKKAGE…SVTLKILPSY (80 aa)) is the PDZ domain. Residues 228–297 (VRQVFVKCHF…PSQFLEEKRK (70 aa)) form the SH3 domain. The Guanylate kinase-like domain occupies 351–538 (RKTLVLIGAQ…AFEKLQTAIE (188 aa)). A Phosphotyrosine modification is found at Tyr513.

This sequence belongs to the MAGUK family. In terms of assembly, interacts with CADM1. Interacts with the LIN7 proteins.

The protein resides in the membrane. The protein is Protein PALS2 of Mus musculus (Mouse).